Reading from the N-terminus, the 133-residue chain is Profilin (133 aa).

This sequence belongs to the profilin family.

Its function is as follows. More likely to influence phosphoinositide metabolism than actin assembly. In Vaccinia virus (strain Tian Tan) (VACV), this protein is Profilin.